Reading from the N-terminus, the 54-residue chain is Large ribosomal subunit protein bL33 (54 aa).

The protein belongs to the bacterial ribosomal protein bL33 family.

The protein is Large ribosomal subunit protein bL33 of Petrotoga mobilis (strain DSM 10674 / SJ95).